A 116-amino-acid chain; its full sequence is Large ribosomal subunit protein bL17 (116 aa).

Belongs to the bacterial ribosomal protein bL17 family. As to quaternary structure, part of the 50S ribosomal subunit. Contacts protein L32.

The sequence is that of Large ribosomal subunit protein bL17 from Aliarcobacter butzleri (strain RM4018) (Arcobacter butzleri).